The following is a 466-amino-acid chain: Glutamate--tRNA ligase (466 aa).

The short motif at 10-20 (PSPTGFLHIGG) is the 'HIGH' region element. Residues 252 to 256 (KLSKR) carry the 'KMSKS' region motif. Position 255 (Lys255) interacts with ATP.

Belongs to the class-I aminoacyl-tRNA synthetase family. Glutamate--tRNA ligase type 1 subfamily. As to quaternary structure, monomer.

It localises to the cytoplasm. It catalyses the reaction tRNA(Glu) + L-glutamate + ATP = L-glutamyl-tRNA(Glu) + AMP + diphosphate. Catalyzes the attachment of glutamate to tRNA(Glu) in a two-step reaction: glutamate is first activated by ATP to form Glu-AMP and then transferred to the acceptor end of tRNA(Glu). The protein is Glutamate--tRNA ligase of Mycoplasmopsis synoviae (strain 53) (Mycoplasma synoviae).